The chain runs to 471 residues: Glutamate--tRNA ligase (471 aa).

The 'HIGH' region motif lies at Pro-9–Gly-19. 4 residues coordinate Zn(2+): Cys-98, Cys-100, Cys-125, and His-127. Positions Lys-237–Arg-241 match the 'KMSKS' region motif. Position 240 (Lys-240) interacts with ATP.

It belongs to the class-I aminoacyl-tRNA synthetase family. Glutamate--tRNA ligase type 1 subfamily. Monomer. The cofactor is Zn(2+).

The protein resides in the cytoplasm. The enzyme catalyses tRNA(Glu) + L-glutamate + ATP = L-glutamyl-tRNA(Glu) + AMP + diphosphate. In terms of biological role, catalyzes the attachment of glutamate to tRNA(Glu) in a two-step reaction: glutamate is first activated by ATP to form Glu-AMP and then transferred to the acceptor end of tRNA(Glu). The protein is Glutamate--tRNA ligase of Citrobacter koseri (strain ATCC BAA-895 / CDC 4225-83 / SGSC4696).